We begin with the raw amino-acid sequence, 496 residues long: Probable cytosol aminopeptidase (496 aa).

The Mn(2+) site is built by K262 and D267. The active site involves K274. D285, D344, and E346 together coordinate Mn(2+). R348 is a catalytic residue.

It belongs to the peptidase M17 family. Mn(2+) serves as cofactor.

The protein resides in the cytoplasm. The enzyme catalyses Release of an N-terminal amino acid, Xaa-|-Yaa-, in which Xaa is preferably Leu, but may be other amino acids including Pro although not Arg or Lys, and Yaa may be Pro. Amino acid amides and methyl esters are also readily hydrolyzed, but rates on arylamides are exceedingly low.. The catalysed reaction is Release of an N-terminal amino acid, preferentially leucine, but not glutamic or aspartic acids.. Presumably involved in the processing and regular turnover of intracellular proteins. Catalyzes the removal of unsubstituted N-terminal amino acids from various peptides. This Rhizobium leguminosarum bv. trifolii (strain WSM2304) protein is Probable cytosol aminopeptidase.